The primary structure comprises 155 residues: HTH-type transcriptional regulator IscR (155 aa).

In terms of domain architecture, HTH rrf2-type spans 2–136 (KLSTKGRYAM…HQTRLSDIIK (135 aa)). Residues 30–53 (LAEVSKRQDISLPYLEQLFVKLRR) constitute a DNA-binding region (H-T-H motif). The tract at residues 141–145 (PCPAV) is heme regulatory motif (HRM). Cysteine 142 provides a ligand contact to [2Fe-2S] cluster.

[2Fe-2S] cluster serves as cofactor.

Regulates the transcription of several operons and genes involved in the biogenesis of Fe-S clusters and Fe-S-containing proteins. Functions as a transcriptional repressor of genes involved in iron metabolism by directly binding to the promoter region of genes preceded by the Iron-Rhodo-box motif. Binds to iscR and hemP promoter regions independently of an Fe-S cluster, but their transcriptional repression is Fe-S cluster-dependent. Seems to activate some target genes in a Fe-S cluster-independent manner. Negatively regulates its own transcription in the presence of iron only. The protein is HTH-type transcriptional regulator IscR of Cereibacter sphaeroides (strain ATCC 17023 / DSM 158 / JCM 6121 / CCUG 31486 / LMG 2827 / NBRC 12203 / NCIMB 8253 / ATH 2.4.1.) (Rhodobacter sphaeroides).